The primary structure comprises 137 residues: Large ribosomal subunit protein uL16 (137 aa).

It belongs to the universal ribosomal protein uL16 family. Part of the 50S ribosomal subunit.

Its function is as follows. Binds 23S rRNA and is also seen to make contacts with the A and possibly P site tRNAs. This chain is Large ribosomal subunit protein uL16, found in Francisella tularensis subsp. holarctica (strain FTNF002-00 / FTA).